The sequence spans 634 residues: UPF0329 protein ECU11_2090 (634 aa).

Basic and acidic residues-rich tracts occupy residues Arg-354–Gly-365 and Gly-397–Glu-407. Residues Arg-354–Glu-438 form a disordered region. Residues Gly-408–Glu-417 are compositionally biased toward acidic residues.

Belongs to the UPF0329 family.

This Encephalitozoon cuniculi (strain GB-M1) (Microsporidian parasite) protein is UPF0329 protein ECU11_2090.